The following is a 527-amino-acid chain: Catalase (527 aa).

The residue at position 2 (Ala-2) is an N-acetylalanine. The residue at position 9 (Ser-9) is a Phosphoserine. Active-site residues include His-75 and Asn-148. Positions 194, 201, 203, and 213 each coordinate NADP(+). Residue Lys-221 is modified to N6-succinyllysine. The residue at position 233 (Lys-233) is an N6-acetyllysine. 4 residues coordinate NADP(+): Lys-237, Trp-303, His-305, and Lys-306. Lys-306 bears the N6-acetyllysine; alternate mark. N6-succinyllysine; alternate is present on Lys-306. Position 358 (Tyr-358) interacts with heme. 2 positions are modified to phosphoserine: Ser-417 and Ser-422. An N6-acetyllysine; alternate modification is found at Lys-480. An N6-succinyllysine; alternate modification is found at Lys-480. Lys-499 is modified (N6-acetyllysine). Position 511 is a phosphothreonine (Thr-511). Ser-515 and Ser-517 each carry phosphoserine. A Microbody targeting signal; atypical motif is present at residues 524 to 527 (KANL).

This sequence belongs to the catalase family. Homotetramer. Interacts (via microbody targeting signal) with PEX5, monomeric form interacts with PEX5, leading to its translocation into peroxisomes. The cofactor is heme. Requires NADP(+) as cofactor.

It is found in the peroxisome matrix. The catalysed reaction is 2 H2O2 = O2 + 2 H2O. In terms of biological role, catalyzes the degradation of hydrogen peroxide (H(2)O(2)) generated by peroxisomal oxidases to water and oxygen, thereby protecting cells from the toxic effects of hydrogen peroxide. Promotes growth of cells including T-cells, B-cells, myeloid leukemia cells, melanoma cells, mastocytoma cells and normal and transformed fibroblast cells. In Homo sapiens (Human), this protein is Catalase (CAT).